A 451-amino-acid polypeptide reads, in one-letter code: Probable phosphoglucosamine mutase (451 aa).

Serine 96 (phosphoserine intermediate) is an active-site residue. Positions 96, 233, 235, and 237 each coordinate Mg(2+). Serine 96 is modified (phosphoserine).

This sequence belongs to the phosphohexose mutase family. The cofactor is Mg(2+). Post-translationally, activated by phosphorylation.

The enzyme catalyses alpha-D-glucosamine 1-phosphate = D-glucosamine 6-phosphate. Catalyzes the conversion of glucosamine-6-phosphate to glucosamine-1-phosphate. This is Probable phosphoglucosamine mutase from Pyrococcus abyssi (strain GE5 / Orsay).